A 154-amino-acid polypeptide reads, in one-letter code: Phospholipase A2 OS1 (154 aa).

The N-terminal stretch at 1–27 is a signal peptide; the sequence is MHPAHLLVLLAVCVSLLGAARIPPLPL. Cystine bridges form between Cys38/Cys104, Cys54/Cys153, Cys56/Cys72, Cys71/Cys132, Cys78/Cys125, Cys88/Cys118, and Cys111/Cys123. Residues Gly57 and Gly59 each coordinate Ca(2+). His75 is a catalytic residue. Asp76 is a Ca(2+) binding site. Asp126 is a catalytic residue.

It belongs to the phospholipase A2 family. Group I subfamily. D49 sub-subfamily. Monomer. Ca(2+) serves as cofactor. As to expression, expressed by the venom gland.

It localises to the secreted. The catalysed reaction is a 1,2-diacyl-sn-glycero-3-phosphocholine + H2O = a 1-acyl-sn-glycero-3-phosphocholine + a fatty acid + H(+). Snake venom phospholipase A2 (PLA2) that has a low specific activity on phospholipid substrates, and is neither neurotoxic, nor myotoxic. Induces endothelial cell migration which is mediated, at least in part, by its hydrolytic products. Shows antimalarial activity, but is not able to potently inhibit HIV-1 replication. Binds in a calcium-independent fashion with very high affinity to a muscle-type (M-type) PLA2 receptor, but is a very poor ligand for neuronal-type (N-type) receptors. PLA2 catalyzes the calcium-dependent hydrolysis of the 2-acyl groups in 3-sn-phosphoglycerides. The sequence is that of Phospholipase A2 OS1 from Oxyuranus scutellatus scutellatus (Australian taipan).